Here is a 604-residue protein sequence, read N- to C-terminus: Elongation factor 4 (604 aa).

The 183-residue stretch at 7 to 189 (KRIRNFCIIA…SVVDRVPPPA (183 aa)) folds into the tr-type G domain. GTP contacts are provided by residues 19–24 (DHGKST) and 136–139 (NKID).

The protein belongs to the TRAFAC class translation factor GTPase superfamily. Classic translation factor GTPase family. LepA subfamily.

It is found in the cell inner membrane. The enzyme catalyses GTP + H2O = GDP + phosphate + H(+). Functionally, required for accurate and efficient protein synthesis under certain stress conditions. May act as a fidelity factor of the translation reaction, by catalyzing a one-codon backward translocation of tRNAs on improperly translocated ribosomes. Back-translocation proceeds from a post-translocation (POST) complex to a pre-translocation (PRE) complex, thus giving elongation factor G a second chance to translocate the tRNAs correctly. Binds to ribosomes in a GTP-dependent manner. This Synechococcus sp. (strain CC9311) protein is Elongation factor 4.